Here is a 179-residue protein sequence, read N- to C-terminus: Acireductone dioxygenase (179 aa).

Residues Met-1 to Glu-12 show a composition bias toward acidic residues. Residues Met-1–Glu-21 are disordered. Residues His-88, His-90, Glu-94, and His-133 each coordinate Fe(2+). The Ni(2+) site is built by His-88, His-90, Glu-94, and His-133.

The protein belongs to the acireductone dioxygenase (ARD) family. As to quaternary structure, monomer. Interacts with MMP14. It depends on Fe(2+) as a cofactor. Requires Ni(2+) as cofactor.

Its subcellular location is the cytoplasm. The protein localises to the nucleus. It localises to the cell membrane. The catalysed reaction is 1,2-dihydroxy-5-(methylsulfanyl)pent-1-en-3-one + O2 = 4-methylsulfanyl-2-oxobutanoate + formate + 2 H(+). It catalyses the reaction 1,2-dihydroxy-5-(methylsulfanyl)pent-1-en-3-one + O2 = 3-(methylsulfanyl)propanoate + CO + formate + 2 H(+). The protein operates within amino-acid biosynthesis; L-methionine biosynthesis via salvage pathway; L-methionine from S-methyl-5-thio-alpha-D-ribose 1-phosphate: step 5/6. In terms of biological role, catalyzes 2 different reactions between oxygen and the acireductone 1,2-dihydroxy-3-keto-5-methylthiopentene (DHK-MTPene) depending upon the metal bound in the active site. Fe-containing acireductone dioxygenase (Fe-ARD) produces formate and 2-keto-4-methylthiobutyrate (KMTB), the alpha-ketoacid precursor of methionine in the methionine recycle pathway. Ni-containing acireductone dioxygenase (Ni-ARD) produces methylthiopropionate, carbon monoxide and formate, and does not lie on the methionine recycle pathway. Also down-regulates cell migration mediated by MMP14. This chain is Acireductone dioxygenase, found in Monodelphis domestica (Gray short-tailed opossum).